A 486-amino-acid chain; its full sequence is MVHLGPKKPQARKGSMADVPKELMQQIENFEKIFTVPTETLQAVTKHFISELEKGLSKKGGNIPMIPGWVMDFPTGKESGDFLAIDLGGTNLRVVLVKLGGDRTFDTTQSKYRLPDAMRTTQNPDELWEFIADSLKAFIDEQFPQGISEPIPLGFTFSFPASQNKINEGILQRWTKGFDIPNIENHDVVPMLQKQITKRNIPIEVVALINDTTGTLVASYYTDPETKMGVIFGTGVNGAYYDVCSDIEKLQGKLSDDIPPSAPMAINCEYGSFDNEHVVLPRTKYDITIDEESPRPGQQTFEKMSSGYYLGEILRLALMDMYKQGFIFKNQDLSKFDKPFVMDTSYPARIEEDPFENLEDTDDLFQNEFGINTTVQERKLIRRLSELIGARAARLSVCGIAAICQKRGYKTGHIAADGSVYNRYPGFKEKAANALKDIYGWTQTSLDDYPIKIVPAEDGSGAGAAVIAALAQKRIAEGKSVGIIGA.

S15 carries the phosphoserine modification. A Hexokinase domain is found at 21 to 469 (KELMQQIENF…SGAGAAVIAA (449 aa)). The residue at position 38 (T38) is a Phosphothreonine. Positions 75–209 (TGKESGDFLA…NIPIEVVALI (135 aa)) are hexokinase small subdomain. Residues 86–91 (DLGGTN) and K111 contribute to the ATP site. S158 carries the post-translational modification Phosphoserine. Residues S158, 175–176 (TK), 210–211 (ND), and N237 contribute to the substrate site. The hexokinase large subdomain stretch occupies residues 210 to 458 (NDTTGTLVAS…YPIKIVPAED (249 aa)). Position 245 is a phosphoserine (S245). A substrate-binding site is contributed by E269. A Phosphoserine modification is found at S272. Residue E302 participates in substrate binding. Residues 307–308 (GY), 344–348 (TSYPA), and 419–423 (SVYNR) contribute to the ATP site.

Belongs to the hexokinase family. As to quaternary structure, homodimer.

It carries out the reaction a D-hexose + ATP = a D-hexose 6-phosphate + ADP + H(+). It catalyses the reaction D-fructose + ATP = D-fructose 6-phosphate + ADP + H(+). The catalysed reaction is D-glucose + ATP = D-glucose 6-phosphate + ADP + H(+). Its pathway is carbohydrate metabolism; hexose metabolism. It functions in the pathway carbohydrate degradation; glycolysis; D-glyceraldehyde 3-phosphate and glycerone phosphate from D-glucose: step 1/4. Its activity is regulated as follows. Subject to allosteric control. Substrate inhibition by ATP. Catalyzes the phosphorylation of hexose, such as D-glucose and D-fructose, to hexose 6-phosphate (D-glucose 6-phosphate and D-fructose 6-phosphate, respectively). Mediates the initial step of glycolysis by catalyzing phosphorylation of D-glucose to D-glucose 6-phosphate. This chain is Hexokinase-2 (HXK2), found in Saccharomyces cerevisiae (strain ATCC 204508 / S288c) (Baker's yeast).